A 457-amino-acid chain; its full sequence is Cytochrome b-c1 complex subunit 1, mitochondrial (457 aa).

The transit peptide at 1–26 (MLRTVTSKTVSNQFKRSLATAVATPK) directs the protein to the mitochondrion.

The protein belongs to the peptidase M16 family. UQCRC1/QCR1 subfamily. Component of the ubiquinol-cytochrome c oxidoreductase (cytochrome b-c1 complex, complex III, CIII), a multisubunit enzyme composed of 10 subunits. The complex is composed of 3 respiratory subunits cytochrome b (COB), cytochrome c1 (CYT1) and Rieske protein (RIP1), 2 core protein subunits COR1 and QCR2, and 5 low-molecular weight protein subunits QCR6, QCR7, QCR8, QCR9 and QCR10. The complex exists as an obligatory dimer and forms supercomplexes (SCs) in the inner mitochondrial membrane with a monomer or a dimer of cytochrome c oxidase (complex IV, CIV), resulting in 2 different assemblies (supercomplexes III(2)IV and III(2)IV(2)). COR1 interacts with COX5A at the CIII-CIV interface.

The protein resides in the mitochondrion inner membrane. Component of the ubiquinol-cytochrome c oxidoreductase, a multisubunit transmembrane complex that is part of the mitochondrial electron transport chain which drives oxidative phosphorylation. The respiratory chain contains 3 multisubunit complexes succinate dehydrogenase (complex II, CII), ubiquinol-cytochrome c oxidoreductase (cytochrome b-c1 complex, complex III, CIII) and cytochrome c oxidase (complex IV, CIV), that cooperate to transfer electrons derived from NADH and succinate to molecular oxygen, creating an electrochemical gradient over the inner membrane that drives transmembrane transport and the ATP synthase. The cytochrome b-c1 complex catalyzes electron transfer from ubiquinol to cytochrome c, linking this redox reaction to translocation of protons across the mitochondrial inner membrane, with protons being carried across the membrane as hydrogens on the quinol. In the process called Q cycle, 2 protons are consumed from the matrix, 4 protons are released into the intermembrane space and 2 electrons are passed to cytochrome c. The polypeptide is Cytochrome b-c1 complex subunit 1, mitochondrial (COR1) (Saccharomyces cerevisiae (strain ATCC 204508 / S288c) (Baker's yeast)).